The chain runs to 170 residues: MNINKPLEILGHVSWLWASSPLHRNWPVSLFAINVLPAIQANQYVLLTRDDYPVAYCSWANLSLENEIKYLNDVTSLVAEDWTSGDRKWFIDWIAPFGDNGALYKYMRKKFPDELFRAIRVDPKTHVGKVSEFHGGKIDKQLANKIFKQYHHELITEVKRKSDFNFSLTG.

Active-site residues include H23 and D92. H151 is a binding site for heme.

It belongs to the RTX toxin acyltransferase family. Monomer. In terms of processing, proteolytically cleaved by the protease systems ClpAP, ClpXP and FtsH, leading to its degradation.

The protein resides in the cytoplasm. The catalysed reaction is tetradecanoyl-[ACP] + L-lysyl-[protein] = N(6)-tetradecanoyl-L-lysyl-[protein] + holo-[ACP] + H(+). Its activity is regulated as follows. The acyltransferase activity is inhibited by heme. Functionally, protein-lysine myristoyltransferase that catalyzes myristoylation of the protoxin (HlyA) at two internal lysine residues, thereby converting it to the active toxin. In Escherichia coli, this protein is Protein-lysine myristoyltransferase HlyC.